The chain runs to 498 residues: Inosine-5'-monophosphate dehydrogenase (498 aa).

CBS domains are found at residues 98 to 155 and 159 to 216; these read MVVN…EQKI and MTRE…PHAS. NAD(+) contacts are provided by residues Asp253 and 303–305; that span reads GIG. K(+)-binding residues include Gly305 and Gly307. Residue Ser308 coordinates IMP. Position 310 (Cys310) interacts with K(+). Cys310 serves as the catalytic Thioimidate intermediate. Residues 343-345, 366-367, and 390-394 contribute to the IMP site; these read DGG, GS, and YRGMG. Catalysis depends on Arg406, which acts as the Proton acceptor. Glu421 contributes to the IMP binding site. Glu475, Ser476, and His477 together coordinate K(+).

This sequence belongs to the IMPDH/GMPR family. In terms of assembly, homotetramer. The cofactor is K(+).

It carries out the reaction IMP + NAD(+) + H2O = XMP + NADH + H(+). Its pathway is purine metabolism; XMP biosynthesis via de novo pathway; XMP from IMP: step 1/1. Its activity is regulated as follows. Mycophenolic acid (MPA) is a non-competitive inhibitor that prevents formation of the closed enzyme conformation by binding to the same site as the amobile flap. In contrast, mizoribine monophosphate (MZP) is a competitive inhibitor that induces the closed conformation. MPA is a potent inhibitor of mammalian IMPDHs but a poor inhibitor of the bacterial enzymes. MZP is a more potent inhibitor of bacterial IMPDH. Functionally, catalyzes the conversion of inosine 5'-phosphate (IMP) to xanthosine 5'-phosphate (XMP), the first committed and rate-limiting step in the de novo synthesis of guanine nucleotides, and therefore plays an important role in the regulation of cell growth. This chain is Inosine-5'-monophosphate dehydrogenase, found in Rhizobium tropici.